The primary structure comprises 96 residues: Antigen H4 (96 aa).

The tract at residues 1–20 (EFQEEIKEGVEEHKHEDDPE) is disordered. Residue N34 is glycosylated (N-linked (GlcNAc...) asparagine).

In Toxoplasma gondii, this protein is Antigen H4 (H4).